The primary structure comprises 249 residues: Aspartate/glutamate leucyltransferase (249 aa).

It belongs to the R-transferase family. Bpt subfamily.

The protein resides in the cytoplasm. It catalyses the reaction N-terminal L-glutamyl-[protein] + L-leucyl-tRNA(Leu) = N-terminal L-leucyl-L-glutamyl-[protein] + tRNA(Leu) + H(+). It carries out the reaction N-terminal L-aspartyl-[protein] + L-leucyl-tRNA(Leu) = N-terminal L-leucyl-L-aspartyl-[protein] + tRNA(Leu) + H(+). Its function is as follows. Functions in the N-end rule pathway of protein degradation where it conjugates Leu from its aminoacyl-tRNA to the N-termini of proteins containing an N-terminal aspartate or glutamate. The polypeptide is Aspartate/glutamate leucyltransferase (Brucella suis (strain ATCC 23445 / NCTC 10510)).